The following is a 194-amino-acid chain: MEQRLAEFRAARKRAGLVAEPSASSQSTQTSGEKAEAATTPKAPSGWLKRFLVWKPRPPSAQAQPSLAQGAAWPRGLESQPPWSPAEEAPPPPQPPPPQPLTPRDRSLLTSVTLLKVLLWLVLLGLFVELEFGLAYFVLSLFYWMYVGMRGPEEKMQGEKSAYSVFNPGCEAIQGSLTAEQLERELHLRPLPRR.

Basic and acidic residues predominate over residues 1-10 (MEQRLAEFRA). Disordered stretches follow at residues 1 to 43 (MEQR…TPKA) and 58 to 104 (PPSA…LTPR). Residues 1–116 (MEQRLAEFRA…SLLTSVTLLK (116 aa)) are Cytoplasmic-facing. Residues 22–32 (SASSQSTQTSG) are compositionally biased toward polar residues. Pro residues predominate over residues 82–101 (PWSPAEEAPPPPQPPPPQPL). Positions 102-116 (TPRDRSLLTSVTLLK) are middle helical (MH). The helical intramembrane region spans 117–137 (VLLWLVLLGLFVELEFGLAYF). Over 138–194 (VLSLFYWMYVGMRGPEEKMQGEKSAYSVFNPGCEAIQGSLTAEQLERELHLRPLPRR) the chain is Cytoplasmic.

The protein belongs to the SAYSD1 family. In terms of assembly, associates (via N-terminus) with ribosomes.

The protein resides in the endoplasmic reticulum membrane. It is found in the cytoplasmic vesicle membrane. Ufmylation 'reader' component of a translocation-associated quality control pathway, a mechanism that takes place when a ribosome has stalled during translation, and which is required to degrade clogged substrates. Specifically recognizes and binds ufmylated ribosomes when a ribosome has stalled, promoting the transport of stalled nascent chain via the TRAPP complex to lysosomes for degradation. This is SAYSvFN domain-containing protein 1 (SAYSD1) from Bos taurus (Bovine).